A 524-amino-acid chain; its full sequence is Coatomer subunit delta-1 (524 aa).

Residues 215 to 244 (MDMDSFASKPKGGRPSAAATAPGKGLGMKL) are disordered. An MHD domain is found at 283-524 (SDPVTVTIEE…RLVAANYQVV (242 aa)).

This sequence belongs to the adaptor complexes medium subunit family. Delta-COP subfamily. In terms of assembly, oligomeric complex that consists of at least the alpha, beta, beta', gamma, delta, epsilon and zeta subunits.

The protein localises to the cytoplasm. It is found in the golgi apparatus membrane. The protein resides in the cytoplasmic vesicle. Its subcellular location is the COPI-coated vesicle membrane. Functionally, the coatomer is a cytosolic protein complex that binds to dilysine motifs and reversibly associates with Golgi non-clathrin-coated vesicles, which further mediate biosynthetic protein transport from the ER, via the Golgi up to the trans Golgi network. Coatomer complex is required for budding from Golgi membranes, and is essential for the retrograde Golgi-to-ER transport of dilysine-tagged proteins. The polypeptide is Coatomer subunit delta-1 (Oryza sativa subsp. japonica (Rice)).